We begin with the raw amino-acid sequence, 179 residues long: Large ribosomal subunit protein uL5 (179 aa).

It belongs to the universal ribosomal protein uL5 family. Part of the 50S ribosomal subunit; part of the 5S rRNA/L5/L18/L25 subcomplex. Contacts the 5S rRNA and the P site tRNA. Forms a bridge to the 30S subunit in the 70S ribosome.

Functionally, this is one of the proteins that bind and probably mediate the attachment of the 5S RNA into the large ribosomal subunit, where it forms part of the central protuberance. In the 70S ribosome it contacts protein S13 of the 30S subunit (bridge B1b), connecting the 2 subunits; this bridge is implicated in subunit movement. Contacts the P site tRNA; the 5S rRNA and some of its associated proteins might help stabilize positioning of ribosome-bound tRNAs. This Aeromonas salmonicida (strain A449) protein is Large ribosomal subunit protein uL5.